The following is a 423-amino-acid chain: Imidazolonepropionase (423 aa).

2 residues coordinate Fe(3+): H87 and H89. H87 and H89 together coordinate Zn(2+). The 4-imidazolone-5-propanoate site is built by R96, Y159, and H192. Residue Y159 coordinates N-formimidoyl-L-glutamate. Fe(3+) is bound at residue H257. Zn(2+) is bound at residue H257. E260 lines the 4-imidazolone-5-propanoate pocket. D331 is a binding site for Fe(3+). D331 contacts Zn(2+). Residues N333 and G335 each contribute to the N-formimidoyl-L-glutamate site. S336 serves as a coordination point for 4-imidazolone-5-propanoate.

The protein belongs to the metallo-dependent hydrolases superfamily. HutI family. Zn(2+) is required as a cofactor. Requires Fe(3+) as cofactor.

Its subcellular location is the cytoplasm. It catalyses the reaction 4-imidazolone-5-propanoate + H2O = N-formimidoyl-L-glutamate. It participates in amino-acid degradation; L-histidine degradation into L-glutamate; N-formimidoyl-L-glutamate from L-histidine: step 3/3. Catalyzes the hydrolytic cleavage of the carbon-nitrogen bond in imidazolone-5-propanoate to yield N-formimidoyl-L-glutamate. It is the third step in the universal histidine degradation pathway. This is Imidazolonepropionase from Porphyromonas gingivalis (strain ATCC 33277 / DSM 20709 / CIP 103683 / JCM 12257 / NCTC 11834 / 2561).